We begin with the raw amino-acid sequence, 201 residues long: dITP/XTP pyrophosphatase (201 aa).

A substrate-binding site is contributed by 7–12; that stretch reads TNNKGK. Mg(2+)-binding residues include glutamate 40 and aspartate 69. Aspartate 69 acts as the Proton acceptor in catalysis. Substrate contacts are provided by residues serine 70, 152-155, lysine 175, and 180-181; these read FGYD and HR.

The protein belongs to the HAM1 NTPase family. In terms of assembly, homodimer. It depends on Mg(2+) as a cofactor.

The catalysed reaction is XTP + H2O = XMP + diphosphate + H(+). The enzyme catalyses dITP + H2O = dIMP + diphosphate + H(+). It carries out the reaction ITP + H2O = IMP + diphosphate + H(+). Functionally, pyrophosphatase that catalyzes the hydrolysis of nucleoside triphosphates to their monophosphate derivatives, with a high preference for the non-canonical purine nucleotides XTP (xanthosine triphosphate), dITP (deoxyinosine triphosphate) and ITP. Seems to function as a house-cleaning enzyme that removes non-canonical purine nucleotides from the nucleotide pool, thus preventing their incorporation into DNA/RNA and avoiding chromosomal lesions. The chain is dITP/XTP pyrophosphatase from Desulforamulus reducens (strain ATCC BAA-1160 / DSM 100696 / MI-1) (Desulfotomaculum reducens).